We begin with the raw amino-acid sequence, 269 residues long: MTLKIGIVGAGGRMGRNLITAVHNAEGVELGAAFERKGSSLVGADAGEVAGIGATGVKISDDLSQNTNFDVLIDFTRPEGTLEHIKFCVANGKKMVIGTTGFDDAGKQAIQAAAEQISIVFASNYSVGVNLVFKLLEKAAKVMGDYCDIEVIEAHHRHKVDAPSGTALSMGEHIAKTLGRDLKTHGVFAREGITGERKRDEIGFATIRAGDVVGEHSVWFADEGERVEIAHKALSRMTFANGAVRAAKWLNTKQNGLFDMTDVLDLNNL.

NAD(+) is bound by residues 9-14 (GAGGRM) and E35. R36 is an NADP(+) binding site. NAD(+)-binding positions include 98–100 (GTT) and 122–125 (ASNY). H155 functions as the Proton donor/acceptor in the catalytic mechanism. A (S)-2,3,4,5-tetrahydrodipicolinate-binding site is contributed by H156. K159 acts as the Proton donor in catalysis. 165–166 (GT) lines the (S)-2,3,4,5-tetrahydrodipicolinate pocket.

This sequence belongs to the DapB family.

It is found in the cytoplasm. The catalysed reaction is (S)-2,3,4,5-tetrahydrodipicolinate + NAD(+) + H2O = (2S,4S)-4-hydroxy-2,3,4,5-tetrahydrodipicolinate + NADH + H(+). It carries out the reaction (S)-2,3,4,5-tetrahydrodipicolinate + NADP(+) + H2O = (2S,4S)-4-hydroxy-2,3,4,5-tetrahydrodipicolinate + NADPH + H(+). It participates in amino-acid biosynthesis; L-lysine biosynthesis via DAP pathway; (S)-tetrahydrodipicolinate from L-aspartate: step 4/4. Catalyzes the conversion of 4-hydroxy-tetrahydrodipicolinate (HTPA) to tetrahydrodipicolinate. The protein is 4-hydroxy-tetrahydrodipicolinate reductase of Actinobacillus pleuropneumoniae serotype 3 (strain JL03).